Consider the following 316-residue polypeptide: Transaldolase (316 aa).

The active-site Schiff-base intermediate with substrate is the Lys-132.

This sequence belongs to the transaldolase family. Type 1 subfamily. Homodimer.

Its subcellular location is the cytoplasm. The enzyme catalyses D-sedoheptulose 7-phosphate + D-glyceraldehyde 3-phosphate = D-erythrose 4-phosphate + beta-D-fructose 6-phosphate. It functions in the pathway carbohydrate degradation; pentose phosphate pathway; D-glyceraldehyde 3-phosphate and beta-D-fructose 6-phosphate from D-ribose 5-phosphate and D-xylulose 5-phosphate (non-oxidative stage): step 2/3. Transaldolase is important for the balance of metabolites in the pentose-phosphate pathway. The protein is Transaldolase of Aeromonas salmonicida (strain A449).